Reading from the N-terminus, the 281-residue chain is Nucleotide-binding protein Patl_0571 (281 aa).

An ATP-binding site is contributed by 8 to 15; that stretch reads GRSGSGKS. 56–59 lines the GTP pocket; the sequence is DVRN.

The protein belongs to the RapZ-like family.

Its function is as follows. Displays ATPase and GTPase activities. The protein is Nucleotide-binding protein Patl_0571 of Pseudoalteromonas atlantica (strain T6c / ATCC BAA-1087).